A 321-amino-acid chain; its full sequence is Lipoyl synthase (321 aa).

Positions 60, 65, 71, 86, 90, 93, and 299 each coordinate [4Fe-4S] cluster. The Radical SAM core domain occupies 72-288; it reads WEKKHATFMI…ETIGRTKGFL (217 aa).

It belongs to the radical SAM superfamily. Lipoyl synthase family. It depends on [4Fe-4S] cluster as a cofactor.

The protein localises to the cytoplasm. The enzyme catalyses [[Fe-S] cluster scaffold protein carrying a second [4Fe-4S](2+) cluster] + N(6)-octanoyl-L-lysyl-[protein] + 2 oxidized [2Fe-2S]-[ferredoxin] + 2 S-adenosyl-L-methionine + 4 H(+) = [[Fe-S] cluster scaffold protein] + N(6)-[(R)-dihydrolipoyl]-L-lysyl-[protein] + 4 Fe(3+) + 2 hydrogen sulfide + 2 5'-deoxyadenosine + 2 L-methionine + 2 reduced [2Fe-2S]-[ferredoxin]. The protein operates within protein modification; protein lipoylation via endogenous pathway; protein N(6)-(lipoyl)lysine from octanoyl-[acyl-carrier-protein]: step 2/2. In terms of biological role, catalyzes the radical-mediated insertion of two sulfur atoms into the C-6 and C-8 positions of the octanoyl moiety bound to the lipoyl domains of lipoate-dependent enzymes, thereby converting the octanoylated domains into lipoylated derivatives. This Mesorhizobium japonicum (strain LMG 29417 / CECT 9101 / MAFF 303099) (Mesorhizobium loti (strain MAFF 303099)) protein is Lipoyl synthase.